A 212-amino-acid chain; its full sequence is Probable 2-dehydro-3-deoxy-6-phosphogalactonate aldolase (212 aa).

Residue R18 participates in 2-dehydro-3-deoxy-6-phospho-D-galactonate binding. E41 acts as the Proton donor/acceptor in catalysis. 2-dehydro-3-deoxy-6-phospho-D-galactonate contacts are provided by T70, K130, G160, G180, and S181. K130 functions as the Schiff-base intermediate with substrate in the catalytic mechanism.

It belongs to the KHG/KDPG aldolase family. Homotrimer.

The catalysed reaction is 2-dehydro-3-deoxy-6-phospho-D-galactonate = D-glyceraldehyde 3-phosphate + pyruvate. The protein operates within carbohydrate acid metabolism; D-galactonate degradation; D-glyceraldehyde 3-phosphate and pyruvate from D-galactonate: step 3/3. Involved in the degradation of galactose via the DeLey-Doudoroff pathway. Catalyzes the reversible, stereospecific retro-aldol cleavage of 2-keto-3-deoxy-6-phosphogalactonate (KDPGal) to pyruvate and D-glyceraldehyde-3-phosphate. This chain is Probable 2-dehydro-3-deoxy-6-phosphogalactonate aldolase (dgoA), found in Rhizobium meliloti (strain 1021) (Ensifer meliloti).